A 941-amino-acid polypeptide reads, in one-letter code: UvrABC system protein A (941 aa).

Position 37 to 44 (37 to 44) interacts with ATP; sequence GLSGSGKS. The C4-type zinc finger occupies 260–287; the sequence is CFKCKMSFEELEPLSFSFNSPKGACESC. 2 ABC transporter domains span residues 316–585 and 605–937; these read IFGY…NNHS and KEKH…KFLA. 637 to 644 contributes to the ATP binding site; it reads GVSGSGKS. The C4-type zinc-finger motif lies at 737–763; the sequence is CEKCQGDGDIKIEMHFLPDVLVQCDSC.

The protein belongs to the ABC transporter superfamily. UvrA family. Forms a heterotetramer with UvrB during the search for lesions.

It is found in the cytoplasm. The UvrABC repair system catalyzes the recognition and processing of DNA lesions. UvrA is an ATPase and a DNA-binding protein. A damage recognition complex composed of 2 UvrA and 2 UvrB subunits scans DNA for abnormalities. When the presence of a lesion has been verified by UvrB, the UvrA molecules dissociate. The polypeptide is UvrABC system protein A (Helicobacter pylori (strain J99 / ATCC 700824) (Campylobacter pylori J99)).